A 172-amino-acid chain; its full sequence is Interferon tau-3 (172 aa).

2 disulfide bridges follow: Cys-1/Cys-99 and Cys-29/Cys-139. Residue Asn-78 is glycosylated (N-linked (GlcNAc...) asparagine).

It belongs to the alpha/beta interferon family. IFN-alphaII subfamily. In terms of tissue distribution, constitutively and exclusively expressed in the mononuclear cells of the extraembryonic trophectoderm.

It is found in the secreted. In terms of biological role, paracrine hormone primarily responsible for maternal recognition of pregnancy. Interacts with endometrial receptors, probably type I interferon receptors, and blocks estrogen receptor expression, preventing the estrogen-induced increase in oxytocin receptor expression in the endometrium. This results in the suppression of the pulsatile endometrial release of the luteolytic hormone prostaglandin F2-alpha, hindering the regression of the corpus luteum (luteolysis) and therefore a return to ovarian cyclicity. This, and a possible direct effect of IFN-tau on prostaglandin synthesis, leads in turn to continued ovarian progesterone secretion, which stimulates the secretion by the endometrium of the nutrients required for the growth of the conceptus. In summary, displays particularly high antiviral and antiproliferative potency concurrently with particular weak cytotoxicity, high antiluteolytic activity and immunomodulatory properties. In contrast with other IFNs, IFN-tau is not virally inducible. The sequence is that of Interferon tau-3 (IFNT3) from Bos taurus (Bovine).